A 327-amino-acid polypeptide reads, in one-letter code: tRNA uridine(34) hydroxylase (327 aa).

The Rhodanese domain occupies 142 to 240 (DDPDTLVIDT…YLEQVPEAES (99 aa)). Cys200 (cysteine persulfide intermediate) is an active-site residue.

This sequence belongs to the TrhO family.

It carries out the reaction uridine(34) in tRNA + AH2 + O2 = 5-hydroxyuridine(34) in tRNA + A + H2O. Catalyzes oxygen-dependent 5-hydroxyuridine (ho5U) modification at position 34 in tRNAs. The chain is tRNA uridine(34) hydroxylase from Synechococcus sp. (strain CC9605).